The following is a 601-amino-acid chain: Leucine-rich repeat-containing protein 40 (601 aa).

LRR repeat units follow at residues 33 to 56, 79 to 101, 102 to 124, 125 to 148, 150 to 170, 171 to 193, 194 to 217, 219 to 239, 240 to 264, 266 to 285, 286 to 308, 309 to 334, 336 to 355, 397 to 420, 423 to 446, 447 to 469, 470 to 492, 493 to 516, 518 to 539, 540 to 563, and 565 to 586; these read ARKS…VWRL, QTDL…DVKL, LPAL…SIGD, LEQL…VWRL, NLRC…DLGQ, LVNL…SLAN, LQNL…ISQM, NLRM…VLAQ, MESL…CCKT, KELH…HLKH, LNAL…EITL, LQGL…TLPK, KSLS…LLTK, IKTL…VFDA, GNPV…IVDL, KDSL…DFCH, LKQL…ELEG, LIKL…LYRI, SLET…QMKT, LSRL…LGNC, and SLRA…ILIK.

This Danio rerio (Zebrafish) protein is Leucine-rich repeat-containing protein 40 (lrrc40).